The sequence spans 199 residues: VAMP-like protein YKT62 (199 aa).

Positions 7 to 131 constitute a Longin domain; it reads LVLKCDPETR…PYLKEASDKF (125 aa). Residues 139 to 199 enclose the v-SNARE coiled-coil homology domain; it reads KLLKIQRELD…KKTNSCCTLL (61 aa). Cys195 carries the S-palmitoyl cysteine lipid modification. Residue Cys196 is modified to Cysteine methyl ester. Cys196 carries S-geranylgeranyl cysteine lipidation. A propeptide spans 197–199 (removed in mature form); sequence TLL.

Belongs to the synaptobrevin family. Interacts with SYP41. Core constituent of the SNARE complex required for membrane fusion at the trans-Golgi network.

The protein localises to the cell membrane. Functionally, involved in the secretory pathway. Essential for membrane fusion mediated by either SYP41 or SYP61; triggers the fusion of phospholipid vesicles containing SYP41 or SYP61 and VTI12. The chain is VAMP-like protein YKT62 from Arabidopsis thaliana (Mouse-ear cress).